Reading from the N-terminus, the 283-residue chain is NAD kinase (283 aa).

Catalysis depends on Asp-61, which acts as the Proton acceptor. Residues Asp-61–Gly-62, Asn-134–Asp-135, Arg-145, Asp-164, Thr-175–Ser-180, and Gln-234 each bind NAD(+).

The protein belongs to the NAD kinase family. A divalent metal cation is required as a cofactor.

The protein resides in the cytoplasm. The enzyme catalyses NAD(+) + ATP = ADP + NADP(+) + H(+). Its function is as follows. Involved in the regulation of the intracellular balance of NAD and NADP, and is a key enzyme in the biosynthesis of NADP. Catalyzes specifically the phosphorylation on 2'-hydroxyl of the adenosine moiety of NAD to yield NADP. The chain is NAD kinase from Clostridium kluyveri (strain NBRC 12016).